The chain runs to 338 residues: Anthranilate phosphoribosyltransferase (338 aa).

5-phospho-alpha-D-ribose 1-diphosphate-binding positions include Gly82, Gly85–Asp86, Thr90, Asn92–Thr95, Lys110–Ser118, and Ser122. Residue Gly82 participates in anthranilate binding. Position 94 (Ser94) interacts with Mg(2+). Asn113 is a binding site for anthranilate. An anthranilate-binding site is contributed by Arg168. Mg(2+)-binding residues include Asp226 and Glu227.

The protein belongs to the anthranilate phosphoribosyltransferase family. In terms of assembly, homodimer. It depends on Mg(2+) as a cofactor.

It catalyses the reaction N-(5-phospho-beta-D-ribosyl)anthranilate + diphosphate = 5-phospho-alpha-D-ribose 1-diphosphate + anthranilate. Its pathway is amino-acid biosynthesis; L-tryptophan biosynthesis; L-tryptophan from chorismate: step 2/5. Its function is as follows. Catalyzes the transfer of the phosphoribosyl group of 5-phosphorylribose-1-pyrophosphate (PRPP) to anthranilate to yield N-(5'-phosphoribosyl)-anthranilate (PRA). The polypeptide is Anthranilate phosphoribosyltransferase (Deinococcus radiodurans (strain ATCC 13939 / DSM 20539 / JCM 16871 / CCUG 27074 / LMG 4051 / NBRC 15346 / NCIMB 9279 / VKM B-1422 / R1)).